Reading from the N-terminus, the 453-residue chain is Carbamoyl phosphate synthase arginine-specific small chain (453 aa).

The transit peptide at 1 to 28 (MFARVFKAMPARASALTSVNASIPARFM) directs the protein to the mitochondrion. One can recognise a Glutamine amidotransferase type-1 domain in the interval 219-406 (HVAVIDCGVK…IDSVKKYKAS (188 aa)). Catalysis depends on Cys295, which acts as the Nucleophile. Active-site residues include His379 and Glu381.

It belongs to the CarA family. Heterodimer composed of 2 chains; the small (or glutamine) chain promotes the hydrolysis of glutamine to ammonia, which is used by the large (or ammonia) chain to synthesize carbamoyl phosphate.

The protein localises to the mitochondrion matrix. The catalysed reaction is hydrogencarbonate + L-glutamine + 2 ATP + H2O = carbamoyl phosphate + L-glutamate + 2 ADP + phosphate + 2 H(+). The enzyme catalyses L-glutamine + H2O = L-glutamate + NH4(+). It functions in the pathway amino-acid biosynthesis; L-arginine biosynthesis; carbamoyl phosphate from bicarbonate: step 1/1. Small subunit of the arginine-specific carbamoyl phosphate synthase (CPSase). CPSase catalyzes the formation of carbamoyl phosphate from the ammonia moiety of glutamine, carbonate, and phosphate donated by ATP, the first step of the arginine biosynthetic pathway. The small subunit (glutamine amidotransferase) binds and cleaves glutamine to supply the large subunit with the substrate ammonia. The protein is Carbamoyl phosphate synthase arginine-specific small chain (cpa1) of Aspergillus fumigatus (strain ATCC MYA-4609 / CBS 101355 / FGSC A1100 / Af293) (Neosartorya fumigata).